Here is a 95-residue protein sequence, read N- to C-terminus: Integration host factor subunit beta (95 aa).

Positions 56-76 are disordered; the sequence is RAPRTGRNPKTGTSVDLDGKY.

It belongs to the bacterial histone-like protein family. In terms of assembly, heterodimer of an alpha and a beta chain.

Its function is as follows. This protein is one of the two subunits of integration host factor, a specific DNA-binding protein that functions in genetic recombination as well as in transcriptional and translational control. In Shewanella sediminis (strain HAW-EB3), this protein is Integration host factor subunit beta.